Reading from the N-terminus, the 412-residue chain is FAD-dependent monooxygenase nscC (412 aa).

A signal peptide spans 1-21 (MAKPQATVLIIGAGISGLTTS). FAD-binding residues include glutamate 35 and alanine 46. A glycan (N-linked (GlcNAc...) asparagine) is linked at asparagine 92. Arginine 119 lines the FAD pocket. 2 N-linked (GlcNAc...) asparagine glycosylation sites follow: asparagine 170 and asparagine 231. Residues aspartate 326 and glycine 339 each contribute to the FAD site.

Belongs to the paxM FAD-dependent monooxygenase family. Requires FAD as cofactor.

It functions in the pathway secondary metabolite biosynthesis. In terms of biological role, FAD-dependent monooxygenase; part of the gene cluster that mediates the biosynthesis of neosartoricin B, a prenylated anthracenone that probably exhibits T-cell antiproliferative activity, suggestive of a physiological role as an immunosuppressive agent. The non-reducing polyketide synthase nscA probably synthesizes and cyclizes the decaketide backbone. The hydrolase nscB then mediates the product release through hydrolysis followed by spontaneous decarboxylation. The prenyltransferase nscD catalyzes the addition of the dimethylallyl group to the aromatic C5. The FAD-dependent monooxygenase nscC is then responsible for the stereospecific hydroxylation at C2. Neosartoricin B can be converted into two additional compounds neosartoricins C and D. Neosartoricin C is a spirocyclic compound that is cyclized through the attack of C3 hydroxyl on C14, followed by dehydration. On the other hand, neosartoricin D is a further cyclized compound in which attack of C2 on C14 in neosartoricin C results in the formation of the acetal-containing dioxabicyclo-octanone ring. Both of these compounds are novel and possibly represent related metabolites of the gene cluster. This chain is FAD-dependent monooxygenase nscC, found in Arthroderma otae (strain ATCC MYA-4605 / CBS 113480) (Microsporum canis).